A 388-amino-acid chain; its full sequence is UDP-4-amino-4-deoxy-L-arabinose--oxoglutarate aminotransferase (388 aa).

N6-(pyridoxal phosphate)lysine is present on Lys-183.

This sequence belongs to the DegT/DnrJ/EryC1 family. ArnB subfamily. Homodimer. Requires pyridoxal 5'-phosphate as cofactor.

The catalysed reaction is UDP-4-amino-4-deoxy-beta-L-arabinose + 2-oxoglutarate = UDP-beta-L-threo-pentopyranos-4-ulose + L-glutamate. It functions in the pathway nucleotide-sugar biosynthesis; UDP-4-deoxy-4-formamido-beta-L-arabinose biosynthesis; UDP-4-deoxy-4-formamido-beta-L-arabinose from UDP-alpha-D-glucuronate: step 2/3. The protein operates within bacterial outer membrane biogenesis; lipopolysaccharide biosynthesis. Functionally, catalyzes the conversion of UDP-4-keto-arabinose (UDP-Ara4O) to UDP-4-amino-4-deoxy-L-arabinose (UDP-L-Ara4N). The modified arabinose is attached to lipid A and is required for resistance to polymyxin and cationic antimicrobial peptides. This chain is UDP-4-amino-4-deoxy-L-arabinose--oxoglutarate aminotransferase, found in Shewanella sediminis (strain HAW-EB3).